Here is a 475-residue protein sequence, read N- to C-terminus: Ribulose bisphosphate carboxylase large chain (475 aa).

Residues 1 to 2 constitute a propeptide that is removed on maturation; it reads MS. P3 carries the N-acetylproline modification. Position 14 is an N6,N6,N6-trimethyllysine (K14). The substrate site is built by N123 and T173. K175 functions as the Proton acceptor in the catalytic mechanism. K177 is a substrate binding site. Residues K201, D203, and E204 each contribute to the Mg(2+) site. N6-carboxylysine is present on K201. H294 functions as the Proton acceptor in the catalytic mechanism. Substrate is bound by residues R295, H327, and S379.

The protein belongs to the RuBisCO large chain family. Type I subfamily. In terms of assembly, heterohexadecamer of 8 large chains and 8 small chains; disulfide-linked. The disulfide link is formed within the large subunit homodimers. Requires Mg(2+) as cofactor. In terms of processing, the disulfide bond which can form in the large chain dimeric partners within the hexadecamer appears to be associated with oxidative stress and protein turnover.

It localises to the plastid. Its subcellular location is the chloroplast. The enzyme catalyses 2 (2R)-3-phosphoglycerate + 2 H(+) = D-ribulose 1,5-bisphosphate + CO2 + H2O. The catalysed reaction is D-ribulose 1,5-bisphosphate + O2 = 2-phosphoglycolate + (2R)-3-phosphoglycerate + 2 H(+). Its function is as follows. RuBisCO catalyzes two reactions: the carboxylation of D-ribulose 1,5-bisphosphate, the primary event in carbon dioxide fixation, as well as the oxidative fragmentation of the pentose substrate in the photorespiration process. Both reactions occur simultaneously and in competition at the same active site. The protein is Ribulose bisphosphate carboxylase large chain of Pinus radiata (Monterey pine).